The primary structure comprises 132 residues: uncharacterized protein (132 aa).

Residues 17 to 75 (RSAVPRWPHLSSQSGVEPPDRWTGTPGWPSRDQEAPGSMMPPAAAQPSAHGALVPPATA) are disordered. A compositionally biased stretch (low complexity) spans 51 to 65 (APGSMMPPAAAQPSA).

In terms of tissue distribution, expressed exclusively in heart.

It is found in the cytoplasm. This is an uncharacterized protein from Homo sapiens (Human).